The sequence spans 251 residues: Triosephosphate isomerase (251 aa).

A substrate-binding site is contributed by 9-11; the sequence is NWK. Catalysis depends on His95, which acts as the Electrophile. Catalysis depends on Glu167, which acts as the Proton acceptor. Substrate is bound by residues Gly173, Ser212, and 233–234; that span reads GG.

Belongs to the triosephosphate isomerase family. As to quaternary structure, homodimer.

It localises to the cytoplasm. It catalyses the reaction D-glyceraldehyde 3-phosphate = dihydroxyacetone phosphate. It participates in carbohydrate biosynthesis; gluconeogenesis. The protein operates within carbohydrate degradation; glycolysis; D-glyceraldehyde 3-phosphate from glycerone phosphate: step 1/1. Functionally, involved in the gluconeogenesis. Catalyzes stereospecifically the conversion of dihydroxyacetone phosphate (DHAP) to D-glyceraldehyde-3-phosphate (G3P). The chain is Triosephosphate isomerase from Pseudomonas putida (strain GB-1).